The chain runs to 373 residues: Glutamine synthetase (373 aa).

T2 carries the N-acetylthreonine modification. The required for glutamine-induced ubiquitination by CRL4(CRBN) and proteasomal degradation stretch occupies residues 2 to 25; the sequence is TTSASSHLNKGIKQVYMSLPQGEK. An N6-acetyllysine; by EP300 mark is found at K11 and K14. The 83-residue stretch at 24-106 folds into the GS beta-grasp domain; the sequence is EKVQAMYIWI…VLCEVFKYNR (83 aa). Y104 is subject to Phosphotyrosine. The 261-residue stretch at 113-373 folds into the GS catalytic domain; the sequence is LRHTCKRIMD…TGDEPFQYKN (261 aa). An ATP-binding site is contributed by E134. Mn(2+)-binding residues include E134, E136, E196, and E203. Residue 203-208 coordinates ATP; the sequence is EFQIGP. Residue 246 to 247 participates in L-glutamate binding; that stretch reads NW. H253 contacts Mn(2+). ATP contacts are provided by residues 255 to 257, R319, and R324; that span reads NFS. R319 contributes to the L-glutamate binding site. Residue 336-338 coordinates ADP; it reads YFE. E338 is a Mn(2+) binding site. Residue R340 coordinates L-glutamate. At S343 the chain carries Phosphoserine.

This sequence belongs to the glutamine synthetase family. As to quaternary structure, decamer; composed of two pentamers. Interacts with PALMD. Interacts with RHOJ. Interacts with BEST2; this interaction tethers a fraction of GLUL to the membrane, causing a decrease of cytosolic glutamine synthase (GS) activity and inhibits the chloride channel activity of BEST2 by affecting the gating at the aperture in the absence of intracellular glutamate. Mg(2+) is required as a cofactor. Requires Mn(2+) as cofactor. Post-translationally, acetylated by EP300/p300; acetylation is stimulated by increased glutamine levels and promotes ubiquitin-mediated proteasomal degradation. In terms of processing, palmitoylated; undergoes autopalmitoylation. Ubiquitinated by ZNRF1. Ubiquitinated by the DCX (DDB1-CUL4-X-box) E3 ubiquitin-protein ligase complex called CRL4(CRBN), leading to proteasomal degradation. In terms of tissue distribution, expressed in endothelial cells.

It is found in the cytoplasm. It localises to the cytosol. Its subcellular location is the microsome. The protein localises to the mitochondrion. The protein resides in the cell membrane. The catalysed reaction is L-glutamate + NH4(+) + ATP = L-glutamine + ADP + phosphate + H(+). The enzyme catalyses L-cysteinyl-[protein] + hexadecanoyl-CoA = S-hexadecanoyl-L-cysteinyl-[protein] + CoA. With respect to regulation, glutamine synthetase activity is inhibited by methionine sulfoximine (MSO). Its function is as follows. Glutamine synthetase that catalyzes the ATP-dependent conversion of glutamate and ammonia to glutamine. Its role depends on tissue localization: in the brain, it regulates the levels of toxic ammonia and converts neurotoxic glutamate to harmless glutamine, whereas in the liver, it is one of the enzymes responsible for the removal of ammonia. Plays a key role in ammonium detoxification during erythropoiesis: the glutamine synthetase activity is required to remove ammonium generated by porphobilinogen deaminase (HMBS) during heme biosynthesis to prevent ammonium accumulation and oxidative stress. Essential for proliferation of fetal skin fibroblasts. Independently of its glutamine synthetase activity, required for endothelial cell migration during vascular development: acts by regulating membrane localization and activation of the GTPase RHOJ, possibly by promoting RHOJ palmitoylation. May act as a palmitoyltransferase for RHOJ: able to autopalmitoylate and then transfer the palmitoyl group to RHOJ. Plays a role in ribosomal 40S subunit biogenesis. Through the interaction with BEST2, inhibits BEST2 channel activity by affecting the gating at the aperture in the absence of intracellular L-glutamate, but sensitizes BEST2 to intracellular L-glutamate, which promotes the opening of BEST2 and thus relieves its inhibitory effect on BEST2. In Homo sapiens (Human), this protein is Glutamine synthetase.